A 154-amino-acid polypeptide reads, in one-letter code: Ribosome maturation factor RimP (154 aa).

It belongs to the RimP family.

The protein localises to the cytoplasm. Required for maturation of 30S ribosomal subunits. This Haemophilus ducreyi (strain 35000HP / ATCC 700724) protein is Ribosome maturation factor RimP.